A 602-amino-acid chain; its full sequence is Elongation factor 4 (602 aa).

Positions 8 to 190 constitute a tr-type G domain; that stretch reads DLIRNFSIVA…AIVHRLPPPK (183 aa). Residues 20-25 and 137-140 each bind GTP; these read DHGKST and NKID.

This sequence belongs to the TRAFAC class translation factor GTPase superfamily. Classic translation factor GTPase family. LepA subfamily.

Its subcellular location is the cell inner membrane. The catalysed reaction is GTP + H2O = GDP + phosphate + H(+). Functionally, required for accurate and efficient protein synthesis under certain stress conditions. May act as a fidelity factor of the translation reaction, by catalyzing a one-codon backward translocation of tRNAs on improperly translocated ribosomes. Back-translocation proceeds from a post-translocation (POST) complex to a pre-translocation (PRE) complex, thus giving elongation factor G a second chance to translocate the tRNAs correctly. Binds to ribosomes in a GTP-dependent manner. This chain is Elongation factor 4, found in Cereibacter sphaeroides (strain KD131 / KCTC 12085) (Rhodobacter sphaeroides).